Reading from the N-terminus, the 184-residue chain is Inorganic pyrophosphatase (184 aa).

Lys-19, Arg-33, and Tyr-45 together coordinate substrate. Positions 55, 60, and 92 each coordinate Mg(2+). Tyr-129 serves as a coordination point for substrate.

The protein belongs to the PPase family. As to quaternary structure, homohexamer. Requires Mg(2+) as cofactor.

It localises to the cytoplasm. It catalyses the reaction diphosphate + H2O = 2 phosphate + H(+). Catalyzes the hydrolysis of inorganic pyrophosphate (PPi) forming two phosphate ions. This is Inorganic pyrophosphatase from Mycoplasma genitalium (strain ATCC 33530 / DSM 19775 / NCTC 10195 / G37) (Mycoplasmoides genitalium).